A 555-amino-acid polypeptide reads, in one-letter code: CTP synthase (555 aa).

The interval 1–271 is amidoligase domain; the sequence is MVKRGKKTKY…DDKLAELFNI (271 aa). Position 19 (Ser19) interacts with CTP. Residue Ser19 coordinates UTP. ATP contacts are provided by residues 20–25 and Asp77; that span reads SLGKGL. Residues Asp77 and Glu145 each contribute to the Mg(2+) site. Residues 152-154, 192-197, and Lys228 each bind CTP; these read DIE and KTKPTQ. UTP-binding positions include 192-197 and Lys228; that span reads KTKPTQ. Positions 297–537 constitute a Glutamine amidotransferase type-1 domain; sequence RIGIVGKYVE…VKAALEHRDA (241 aa). Gly358 is a binding site for L-glutamine. The active-site Nucleophile; for glutamine hydrolysis is the Cys385. L-glutamine-binding positions include 386-389, Glu409, and Arg466; that span reads LGLQ. Active-site residues include His510 and Glu512. The segment at 535 to 555 is disordered; it reads RDAQQRQPPAEVKKLAVGKNG.

It belongs to the CTP synthase family. Homotetramer.

It catalyses the reaction UTP + L-glutamine + ATP + H2O = CTP + L-glutamate + ADP + phosphate + 2 H(+). It carries out the reaction L-glutamine + H2O = L-glutamate + NH4(+). The enzyme catalyses UTP + NH4(+) + ATP = CTP + ADP + phosphate + 2 H(+). Its pathway is pyrimidine metabolism; CTP biosynthesis via de novo pathway; CTP from UDP: step 2/2. Its activity is regulated as follows. Allosterically activated by GTP, when glutamine is the substrate; GTP has no effect on the reaction when ammonia is the substrate. The allosteric effector GTP functions by stabilizing the protein conformation that binds the tetrahedral intermediate(s) formed during glutamine hydrolysis. Inhibited by the product CTP, via allosteric rather than competitive inhibition. In terms of biological role, catalyzes the ATP-dependent amination of UTP to CTP with either L-glutamine or ammonia as the source of nitrogen. Regulates intracellular CTP levels through interactions with the four ribonucleotide triphosphates. The protein is CTP synthase of Anaeromyxobacter dehalogenans (strain 2CP-1 / ATCC BAA-258).